We begin with the raw amino-acid sequence, 359 residues long: Diacyltrehalose acyltransferase Chp2 (359 aa).

The helical transmembrane segment at 4–24 threads the bilayer; it reads VIAGAFAVWLVGWAGGFGTAI. The PE-PPE domain occupies 79 to 316; sequence PNAKHDLIDY…VLQPQIDAAY (238 aa).

Belongs to the mycobacterial PPE family.

It is found in the cell inner membrane. Its activity is regulated as follows. Activity is probably potentiated by the DAT/PAT transporter MmpL10. Inhibited by the lipase inhibitor tetrahydrolipstatin (THL). Its function is as follows. Involved in the final steps of polyacyltrehalose (PAT) biosynthesis. Catalyzes the transfer of three mycolipenoyl groups onto diacyltrehalose (DAT) to form PAT. The sequence is that of Diacyltrehalose acyltransferase Chp2 from Mycobacterium tuberculosis (strain ATCC 25618 / H37Rv).